A 1024-amino-acid chain; its full sequence is MLKFFEKIFGSKHEKDVKKIQPVIDRINELHAALVPLSDDELRARCMELKARVRKTLEPIESKRSDLYLKLDDAAISLEDADRINEEIDELAKEYETATAAVLEEILPDTYAVVKDTCRRLKGHVYTVMGREATWDMVPYDVQLIGGIVLHSGKISEMATGEGKTLVSTLPTFLNALTGRGVHLVTVNDYLAQRDKEWMNPVFEFHGISVGVILNTMRPEERRRQYQCDVTYGTNNEFGFDYLRDNMAGTEDEMVQRDFYFAIVDEVDSVLIDEARTPLIISGPVPNADNSKFEEIRPWIEQLVRAQQHLTASFLSEAEKGLKNEKPDPEAGLALLRVKRGQPKNSRYTKLLAQQGVAKLIQTTENEYLRDKSSRMHEVDDELYFAVDEKASTIDLTDKGREFLSKLSHQDRDLFLLPDVGTEIAAIDADSSIAAPDKIMRKDEVYRLFAERSERLHNIAQLLKAYSLFTKDDEYVVQNGQVMIVDEFTGRILPGRRYSDGLHQAIEAKENVKIEGETQTMATVTIQNFFRLYKKLAGMTGTAETEASEFYEIYKLDVVAIPTNRPIVRRDMDDLVYKTRREKYNAIAAKVEELQKKGQPVLVGTTSVEVSETLSRMLRAKRITHNVLNAKQNEREAEIVAEAGRQGAVTIATNMAGRGTDIKLGEGVRDLGGLFILGSERHESRRIDRQLRGRAGRQGDPGESVFFVSLEDELMRLFGSDRVISVMDRLGHEEGDVIEHSMITKSIERAQKKVEEQNFAIRKRLLEYDDVLNQQREVIYTRRRDGLKKERLTSDILDLLRDYCDTTVEKHHKTHDVDALEEQVLRELSIEFKPDRETFEREGIAPMADSLYDLALAFYRRKEEAVPEEIMRQIEKYAVLSVIDKHWREHLREIDTLREGINLRAYGQKDPLLEYKQEAYNLFILLLHEIELETLSLAFKLFPVHPDEAGEIEERRRRAAIQQEKLMAQHEEAGSVYNAQPDGEPESQASKQQPVVADHSKPGRNDLCPCGSGKKYKNCHGREA.

ATP is bound by residues Gln143, 161–165, and Asp661; that span reads GEGKT. Residues 970-1024 form a disordered region; it reads HEEAGSVYNAQPDGEPESQASKQQPVVADHSKPGRNDLCPCGSGKKYKNCHGREA. Residues Cys1008, Cys1010, Cys1019, and His1020 each contribute to the Zn(2+) site. The span at 1014–1024 shows a compositional bias: basic residues; sequence KKYKNCHGREA.

It belongs to the SecA family. Monomer and homodimer. Part of the essential Sec protein translocation apparatus which comprises SecA, SecYEG and auxiliary proteins SecDF. Other proteins may also be involved. Requires Zn(2+) as cofactor.

It localises to the cell inner membrane. It is found in the cytoplasm. It catalyses the reaction ATP + H2O + cellular proteinSide 1 = ADP + phosphate + cellular proteinSide 2.. In terms of biological role, part of the Sec protein translocase complex. Interacts with the SecYEG preprotein conducting channel. Has a central role in coupling the hydrolysis of ATP to the transfer of proteins into and across the cell membrane, serving as an ATP-driven molecular motor driving the stepwise translocation of polypeptide chains across the membrane. This Chlorobium luteolum (strain DSM 273 / BCRC 81028 / 2530) (Pelodictyon luteolum) protein is Protein translocase subunit SecA.